The sequence spans 620 residues: Glutathione-regulated potassium-efflux system protein KefC (620 aa).

12 helical membrane passes run H4–V24, L26–L46, S54–L74, G90–L110, V114–M134, F149–L169, L178–L198, V218–G238, G270–V290, L294–V314, W327–Q347, and A359–T379. The 120-residue stretch at Q399 to T518 folds into the RCK N-terminal domain. The tract at residues Q599 to I620 is disordered.

This sequence belongs to the monovalent cation:proton antiporter 2 (CPA2) transporter (TC 2.A.37) family. KefC subfamily. As to quaternary structure, homodimer. Interacts with the regulatory subunit KefF.

It is found in the cell inner membrane. Functionally, pore-forming subunit of a potassium efflux system that confers protection against electrophiles. Catalyzes K(+)/H(+) antiport. The polypeptide is Glutathione-regulated potassium-efflux system protein KefC (Salmonella choleraesuis (strain SC-B67)).